A 620-amino-acid polypeptide reads, in one-letter code: Dopamine beta-hydroxylase (620 aa).

The Cytoplasmic segment spans residues 1–19; sequence MQPHLSHQPCWSLPSPSVR. A helical; Signal-anchor for type II membrane protein transmembrane segment spans residues 20 to 40; it reads EAASMYGTAVAIFLVILVAAL. At 41 to 620 the chain is on the intragranular side; it reads QGSEPPESPF…FVVITHGGRH (580 aa). The DOMON domain occupies 60–176; sequence GTLELSWNVS…DTVHLVYGIL (117 aa). Residues Asn67 and Asn187 are each glycosylated (N-linked (GlcNAc...) asparagine). 6 disulfides stabilise this stretch: Cys157-Cys599, Cys235-Cys286, Cys272-Cys298, Cys393-Cys506, Cys397-Cys568, and Cys469-Cys491. The active site involves Tyr233. The Cu(2+) site is built by His265 and His266. Asn274 is a glycosylation site (N-linked (GlcNAc...) asparagine). His336 serves as a coordination point for Cu(2+). Residue Ser349 is modified to Phosphoserine; by CaMK. His415 is a catalytic residue. The Cu(2+) site is built by His415 and His417. A glycan (N-linked (GlcNAc...) asparagine) is linked at Asn475. A Cu(2+)-binding site is contributed by Met490. N-linked (GlcNAc...) asparagine glycans are attached at residues Asn569 and Asn587.

This sequence belongs to the copper type II ascorbate-dependent monooxygenase family. Homotetramer; composed of two disulfide-linked dimers. Cu(2+) is required as a cofactor. Post-translationally, proteolytic cleavage after the membrane-anchor leads to the release of the soluble form. In terms of processing, N-glycosylated. As to expression, chromaffin granules of the adrenal medulla and synaptic vesicles of the sympathetic nervous system.

Its subcellular location is the cytoplasmic vesicle. It is found in the secretory vesicle lumen. The protein resides in the secretory vesicle. The protein localises to the chromaffin granule lumen. It localises to the secreted. Its subcellular location is the secretory vesicle membrane. It is found in the chromaffin granule membrane. The catalysed reaction is dopamine + 2 L-ascorbate + O2 = (R)-noradrenaline + 2 monodehydro-L-ascorbate radical + H2O. It participates in catecholamine biosynthesis; (R)-noradrenaline biosynthesis; (R)-noradrenaline from dopamine: step 1/1. Catalyzes the hydroxylation of dopamine to noradrenaline (also known as norepinephrine), and is thus vital for regulation of these neurotransmitters. This Rattus norvegicus (Rat) protein is Dopamine beta-hydroxylase (Dbh).